Reading from the N-terminus, the 367-residue chain is Peptide chain release factor 2 (367 aa).

An N5-methylglutamine modification is found at Q249.

The protein belongs to the prokaryotic/mitochondrial release factor family. Methylated by PrmC. Methylation increases the termination efficiency of RF2.

The protein localises to the cytoplasm. Peptide chain release factor 2 directs the termination of translation in response to the peptide chain termination codons UGA and UAA. The protein is Peptide chain release factor 2 of Thermotoga petrophila (strain ATCC BAA-488 / DSM 13995 / JCM 10881 / RKU-1).